Here is a 493-residue protein sequence, read N- to C-terminus: Ectonucleoside triphosphate diphosphohydrolase 8 (493 aa).

The Cytoplasmic segment spans residues 1–7 (MEYKGKV). A helical membrane pass occupies residues 8 to 28 (VAGLLTATCVFSIIALILSAV). At 29–463 (DVKDVFLPPG…ALEHVKGHEP (435 aa)) the chain is on the extracellular side. Residues asparagine 65, asparagine 79, and asparagine 133 are each glycosylated (N-linked (GlcNAc...) asparagine). An intrachain disulfide couples cysteine 76 to cysteine 100. Glutamate 166 acts as the Proton acceptor in catalysis. 9 N-linked (GlcNAc...) asparagine glycosylation sites follow: asparagine 223, asparagine 234, asparagine 267, asparagine 324, asparagine 330, asparagine 361, asparagine 372, asparagine 382, and asparagine 445. Cysteine 244 and cysteine 291 are oxidised to a cystine. Cysteine 327 and cysteine 333 are disulfide-bonded. Cysteine 379 and cysteine 401 form a disulfide bridge. Residues 464 to 486 (SLWAGAISFIVLAIVAGLVAILL) form a helical membrane-spanning segment. Topologically, residues 487 to 493 (QCFWKSK) are cytoplasmic.

This sequence belongs to the GDA1/CD39 NTPase family. It depends on Ca(2+) as a cofactor. Requires Mg(2+) as cofactor. Post-translationally, N-glycosylated.

The protein localises to the cell membrane. It carries out the reaction a ribonucleoside 5'-triphosphate + 2 H2O = a ribonucleoside 5'-phosphate + 2 phosphate + 2 H(+). Canalicular ectonucleoside NTPDase responsible for the main hepatic NTPDase activity. Ectonucleoside ATPases catalyze the hydrolysis of gamma- and beta-phosphate residues of nucleotides, playing a central role in concentration of extracellular nucleotides. This Gallus gallus (Chicken) protein is Ectonucleoside triphosphate diphosphohydrolase 8 (ENTPD8).